Reading from the N-terminus, the 408-residue chain is GTPase HflX (408 aa).

Residues 198-361 (PRVSLVGYTN…LIVREMERHY (164 aa)) enclose the Hflx-type G domain. GTP contacts are provided by residues 204–211 (GYTNAGKS), 229–233 (FVTLD), 251–254 (DTVG), 317–320 (NKAD), and 339–341 (SAK). Residues Ser-211 and Thr-231 each coordinate Mg(2+).

Belongs to the TRAFAC class OBG-HflX-like GTPase superfamily. HflX GTPase family. In terms of assembly, monomer. Associates with the 50S ribosomal subunit. Requires Mg(2+) as cofactor.

The protein resides in the cytoplasm. GTPase that associates with the 50S ribosomal subunit and may have a role during protein synthesis or ribosome biogenesis. This is GTPase HflX from Spirochaeta thermophila (strain ATCC 49972 / DSM 6192 / RI 19.B1).